The primary structure comprises 398 residues: CCA-adding enzyme (398 aa).

ATP-binding residues include Gly32 and Arg35. CTP-binding residues include Gly32 and Arg35. The Mg(2+) site is built by Asp45 and Asp47. Arg116, Asp159, Arg162, Arg165, and Arg168 together coordinate ATP. CTP is bound by residues Arg116, Asp159, Arg162, Arg165, and Arg168.

It belongs to the tRNA nucleotidyltransferase/poly(A) polymerase family. Bacterial CCA-adding enzyme type 3 subfamily. In terms of assembly, homodimer. Mg(2+) serves as cofactor.

It carries out the reaction a tRNA precursor + 2 CTP + ATP = a tRNA with a 3' CCA end + 3 diphosphate. The enzyme catalyses a tRNA with a 3' CCA end + 2 CTP + ATP = a tRNA with a 3' CCACCA end + 3 diphosphate. Its function is as follows. Catalyzes the addition and repair of the essential 3'-terminal CCA sequence in tRNAs without using a nucleic acid template. Adds these three nucleotides in the order of C, C, and A to the tRNA nucleotide-73, using CTP and ATP as substrates and producing inorganic pyrophosphate. tRNA 3'-terminal CCA addition is required both for tRNA processing and repair. Also involved in tRNA surveillance by mediating tandem CCA addition to generate a CCACCA at the 3' terminus of unstable tRNAs. While stable tRNAs receive only 3'-terminal CCA, unstable tRNAs are marked with CCACCA and rapidly degraded. This Lactobacillus gasseri (strain ATCC 33323 / DSM 20243 / BCRC 14619 / CIP 102991 / JCM 1131 / KCTC 3163 / NCIMB 11718 / NCTC 13722 / AM63) protein is CCA-adding enzyme.